Here is a 475-residue protein sequence, read N- to C-terminus: Protein nucleotidyltransferase YdiU (475 aa).

8 residues coordinate ATP: Gly-82, Gly-84, Arg-85, Lys-105, Asp-117, Gly-118, Arg-168, and Arg-175. Asp-240 serves as the catalytic Proton acceptor. The Mg(2+) site is built by Asn-241 and Asp-250. Asp-250 contributes to the ATP binding site.

Belongs to the SELO family. Mg(2+) serves as cofactor. Mn(2+) is required as a cofactor.

It carries out the reaction L-seryl-[protein] + ATP = 3-O-(5'-adenylyl)-L-seryl-[protein] + diphosphate. The catalysed reaction is L-threonyl-[protein] + ATP = 3-O-(5'-adenylyl)-L-threonyl-[protein] + diphosphate. It catalyses the reaction L-tyrosyl-[protein] + ATP = O-(5'-adenylyl)-L-tyrosyl-[protein] + diphosphate. The enzyme catalyses L-histidyl-[protein] + UTP = N(tele)-(5'-uridylyl)-L-histidyl-[protein] + diphosphate. It carries out the reaction L-seryl-[protein] + UTP = O-(5'-uridylyl)-L-seryl-[protein] + diphosphate. The catalysed reaction is L-tyrosyl-[protein] + UTP = O-(5'-uridylyl)-L-tyrosyl-[protein] + diphosphate. In terms of biological role, nucleotidyltransferase involved in the post-translational modification of proteins. It can catalyze the addition of adenosine monophosphate (AMP) or uridine monophosphate (UMP) to a protein, resulting in modifications known as AMPylation and UMPylation. The polypeptide is Protein nucleotidyltransferase YdiU (Aeromonas hydrophila subsp. hydrophila (strain ATCC 7966 / DSM 30187 / BCRC 13018 / CCUG 14551 / JCM 1027 / KCTC 2358 / NCIMB 9240 / NCTC 8049)).